The sequence spans 132 residues: Large-conductance mechanosensitive channel (132 aa).

2 consecutive transmembrane segments (helical) span residues 11–31 (FISRGNALDLAVGVVIGGAFG) and 75–95 (GSFLQAVFDFVIIAFAIFLLV).

This sequence belongs to the MscL family. Homopentamer.

It localises to the cell inner membrane. Its function is as follows. Channel that opens in response to stretch forces in the membrane lipid bilayer. May participate in the regulation of osmotic pressure changes within the cell. The sequence is that of Large-conductance mechanosensitive channel from Synechococcus sp. (strain JA-2-3B'a(2-13)) (Cyanobacteria bacterium Yellowstone B-Prime).